A 689-amino-acid polypeptide reads, in one-letter code: Protein asunder (689 aa).

Positions 521-550 (NGARLKLSKAKDQYRLLYRELEQLIQLNAT) form a coiled coil. 2 disordered regions span residues 591-619 (SPERLEPISSVGASGSSNSNSLLKASKRR) and 665-689 (GTKDKDAVTTGASITPNVKEESVRS). Over residues 599–614 (SSVGASGSSNSNSLLK) the composition is skewed to low complexity. The short motif at 613–619 (LKASKRR) is the Nuclear localization signal (NLS) element.

It belongs to the Integrator subunit 13 family. In terms of assembly, belongs to the multiprotein complex Integrator, at least composed of IntS1, IntS2, IntS3, IntS4, omd/IntS5, IntS6, defl/IntS7, IntS8, IntS9, IntS10, IntS11, IntS12, asun/IntS13, IntS14 and IntS15. The core complex associates with protein phosphatase 2A subunits mts/PP2A and Pp2A-29B, to form the Integrator-PP2A (INTAC) complex. Phosphorylated.

The protein localises to the nucleus. It localises to the cytoplasm. It is found in the perinuclear region. Functionally, component of the integrator complex, a multiprotein complex that terminates RNA polymerase II (Pol II) transcription in the promoter-proximal region of genes. The integrator complex provides a quality checkpoint during transcription elongation by driving premature transcription termination of transcripts that are unfavorably configured for transcriptional elongation: the complex terminates transcription by (1) catalyzing dephosphorylation of the C-terminal domain (CTD) of Pol II subunit Polr2A/Rbp1 and Spt5, and (2) degrading the exiting nascent RNA transcript via endonuclease activity. The integrator complex is also involved in the 3'-end processing of the U7 snRNA, and also the spliceosomal snRNAs U1, U2, U4 and U5. The protein is Protein asunder (asun) of Drosophila sechellia (Fruit fly).